A 375-amino-acid chain; its full sequence is Chaperone protein DnaJ (375 aa).

Residues 5 to 70 (DFYETLGVAK…QKRAAYDRYG (66 aa)) form the J domain. Residues 136 to 214 (GKTAQIRVPT…CHGQGRVTEE (79 aa)) form a CR-type zinc finger. The Zn(2+) site is built by Cys-149, Cys-152, Cys-166, Cys-169, Cys-188, Cys-191, Cys-202, and Cys-205. CXXCXGXG motif repeat units follow at residues 149–156 (CDVCSGSG), 166–173 (CGTCQGSG), 188–195 (CPTCHGRG), and 202–209 (CPKCHGQG).

Belongs to the DnaJ family. In terms of assembly, homodimer. Requires Zn(2+) as cofactor.

The protein localises to the cytoplasm. Participates actively in the response to hyperosmotic and heat shock by preventing the aggregation of stress-denatured proteins and by disaggregating proteins, also in an autonomous, DnaK-independent fashion. Unfolded proteins bind initially to DnaJ; upon interaction with the DnaJ-bound protein, DnaK hydrolyzes its bound ATP, resulting in the formation of a stable complex. GrpE releases ADP from DnaK; ATP binding to DnaK triggers the release of the substrate protein, thus completing the reaction cycle. Several rounds of ATP-dependent interactions between DnaJ, DnaK and GrpE are required for fully efficient folding. Also involved, together with DnaK and GrpE, in the DNA replication of plasmids through activation of initiation proteins. In Rhizobium etli (strain CIAT 652), this protein is Chaperone protein DnaJ.